Reading from the N-terminus, the 92-residue chain is Small ribosomal subunit protein uS19c (92 aa).

It belongs to the universal ribosomal protein uS19 family.

It localises to the plastid. The protein localises to the chloroplast. Functionally, protein S19 forms a complex with S13 that binds strongly to the 16S ribosomal RNA. This chain is Small ribosomal subunit protein uS19c, found in Chloranthus spicatus (Chulantree).